Reading from the N-terminus, the 1056-residue chain is Potassium transporter TRK1 (1056 aa).

Topologically, residues 1–46 (MLYRVSGFYKRHTRNFTNIDYGYYIRNFIHHIASKIYPYAKVVLPN) are cytoplasmic. The chain crosses the membrane as a helical span at residues 47-67 (FRAAHYFYILTLVILGSILVY). The Extracellular portion of the chain corresponds to 68-73 (PVKTCA). The stretch at 74 to 90 (YIDVLFFTAGASTQAGL) is an intramembrane region. The Extracellular portion of the chain corresponds to 91 to 99 (NTVNVNDLS). Residues 100 to 122 (LYQQIVLYLLATLATPIFIHGSL) traverse the membrane as a helical segment. The Cytoplasmic portion of the chain corresponds to 123–622 (LFVRLYYFER…LGGIEYRAVK (500 aa)). Disordered regions lie at residues 180-276 (REAE…IDPE), 290-350 (KNQE…EDED), and 404-571 (PWTS…SIEN). Residues 186 to 203 (SSSSPQSSSSQTSQPVST) show a composition bias toward low complexity. A compositionally biased stretch (basic and acidic residues) spans 236–245 (EKIHFEEPQR). Residues 335–344 (PATNSVGTGN) show a composition bias toward polar residues. A compositionally biased stretch (low complexity) spans 412–423 (TLSNSSKKGSLS). Composition is skewed to acidic residues over residues 428–449 (DTEDDSEDEEYASIDSETSDIS) and 469–487 (YEEDEDEDEHNSDDDDDGE). The segment covering 521–533 (RSNTLDTPQQNTS) has biased composition (polar residues). Over residues 537 to 549 (KIRKKAPKRKTPR) the composition is skewed to basic residues. Residues 553–563 (NASFNQHSNVS) show a composition bias toward polar residues. Residues 623 to 646 (LLIKIIVVYYVGFNIIPGVMLSIW) form a helical membrane-spanning segment. At 647–665 (IYCMPHYKNLMISSSISPA) the chain is on the extracellular side. Residues 666-682 (WWAFFTSQSSFNDLGLT) lie within the membrane without spanning it. Topologically, residues 683 to 693 (LTSNSMMSFNQ) are extracellular. A helical transmembrane segment spans residues 694-710 (NAFVQILCSFLIVIGNT). Residues 711-754 (GFPILLRFIIWVMFKTARPLSLYKESLGFLLDHPRRCFTLLFPS) lie on the Cytoplasmic side of the membrane. Residues 755 to 778 (VPTWWLFFILVVLNGFDLVIFCIL) form a helical membrane-spanning segment. Topologically, residues 779–793 (DLHDDTFKGVDMGYR) are extracellular. Residues 794–810 (VLNGLFQAFCTRTVGFS) lie within the membrane without spanning it. Topologically, residues 811–817 (VMDLSQL) are extracellular. The chain crosses the membrane as a helical span at residues 818–841 (HAATQVSYLIMMYISVLPIAISVR). At 842–874 (RTNVYEEQSLGVYAKENAEGVDESAPSNYVGSH) the chain is on the cytoplasmic side. The helical transmembrane segment at 875–896 (LRNQLSYDLWYICLGLFIICIA) threads the bilayer. Topologically, residues 897-909 (EGKRLKEQDLRFS) are extracellular. The stretch at 910 to 928 (IFAVLFEIVSAYGTVGMSM) is an intramembrane region. The Extracellular portion of the chain corresponds to 929 to 942 (GYPGVDCSLSGEFN). A helical transmembrane segment spans residues 943 to 965 (VISKLVIIAMMIRGRHRGLPYTI). Residues 966–1056 (DRAIMLPNAA…RYVVRTVSEV (91 aa)) lie on the Cytoplasmic side of the membrane.

This sequence belongs to the TrkH potassium transport family.

It is found in the cell membrane. The enzyme catalyses K(+)(in) = K(+)(out). It carries out the reaction chloride(in) = chloride(out). With respect to regulation, TRK1-mediated chloride conductance is blocked by 4,4'-diisothiocyanatostilbene-2,2'-disulfonic acid. In terms of biological role, potassium transporter that mediates K(+) influx, as well as Cl(-) efflux as a secondary function. TRK1 is the major K(+) uptake transporter that regulates membrane potential and intracellular pH. The TRK1-mediated Cl(-) efflux should serve as a Cl(-) detoxification route and may play a role in sustaining C.albicans on mammalian epithelial surfaces, or in physiological saline solutions such as saliva. Its function is as follows. Mediates candidacidal activities of cysteine-free peptides, but not of defensins. The hallmark of salivary gland-secreted histatin-5 (Hst 5) killing of C.albicans is the rapid efflux of cellular ATP and other small nucleotides and ions from the cell as well as concurrent intracellular uptake of propidium iodide (PI). TRK1 is the channel for Hst 5-induced killing and histatin-5 may directly or indirectly alter TRK1 function, allowing the efflux of larger anions, including ATP, and the influx of small cationic dyes, such as PI. The chain is Potassium transporter TRK1 from Candida albicans (strain SC5314 / ATCC MYA-2876) (Yeast).